We begin with the raw amino-acid sequence, 270 residues long: DNA-directed RNA polymerase subunit Rpo3 (270 aa).

Positions 206, 209, and 212 each coordinate [3Fe-4S] cluster.

It belongs to the archaeal Rpo3/eukaryotic RPB3 RNA polymerase subunit family. Part of the RNA polymerase complex. It depends on [3Fe-4S] cluster as a cofactor.

Its subcellular location is the cytoplasm. The catalysed reaction is RNA(n) + a ribonucleoside 5'-triphosphate = RNA(n+1) + diphosphate. DNA-dependent RNA polymerase (RNAP) catalyzes the transcription of DNA into RNA using the four ribonucleoside triphosphates as substrates. The protein is DNA-directed RNA polymerase subunit Rpo3 of Methanosphaera stadtmanae (strain ATCC 43021 / DSM 3091 / JCM 11832 / MCB-3).